The chain runs to 548 residues: Chaperonin GroEL (548 aa).

Residues 29 to 32, K50, 86 to 90, G414, 478 to 480, and D494 each bind ATP; these read TMGP, DGTTT, and NAA.

The protein belongs to the chaperonin (HSP60) family. Forms a cylinder of 14 subunits composed of two heptameric rings stacked back-to-back. Interacts with the co-chaperonin GroES.

The protein resides in the cytoplasm. The enzyme catalyses ATP + H2O + a folded polypeptide = ADP + phosphate + an unfolded polypeptide.. In terms of biological role, together with its co-chaperonin GroES, plays an essential role in assisting protein folding. The GroEL-GroES system forms a nano-cage that allows encapsulation of the non-native substrate proteins and provides a physical environment optimized to promote and accelerate protein folding. This Legionella pneumophila (strain Corby) protein is Chaperonin GroEL.